We begin with the raw amino-acid sequence, 449 residues long: Trigger factor (449 aa).

Residues 173 to 258 (GDRVTVDFVG…LKKVEWPHLP (86 aa)) enclose the PPIase FKBP-type domain.

The protein belongs to the FKBP-type PPIase family. Tig subfamily.

The protein localises to the cytoplasm. The enzyme catalyses [protein]-peptidylproline (omega=180) = [protein]-peptidylproline (omega=0). Its function is as follows. Involved in protein export. Acts as a chaperone by maintaining the newly synthesized protein in an open conformation. Functions as a peptidyl-prolyl cis-trans isomerase. The protein is Trigger factor of Burkholderia mallei (strain NCTC 10229).